The following is a 1037-amino-acid chain: Probable aminoglycoside efflux pump (1037 aa).

Residues 1–9 are Cytoplasmic-facing; that stretch reads MANFFIDRP. A helical membrane pass occupies residues 10-28; it reads IFAWVLAILLCLTGTLAIF. The Periplasmic portion of the chain corresponds to 29–339; the sequence is SLPVEQYPDL…TSFVKASIED (311 aa). The chain crosses the membrane as a helical span at residues 340–359; that stretch reads VVKTLLEAIALVFLVMYLFL. The Cytoplasmic segment spans residues 360-365; that stretch reads QNFRAT. A helical membrane pass occupies residues 366-385; it reads LIPTIAVPVVLMGTFSVLYA. The Periplasmic segment spans residues 386–391; that stretch reads FGYSVN. A helical membrane pass occupies residues 392–413; it reads TLTMFAMVLAIGLLVDDAIVVV. Topologically, residues 414–441 are cytoplasmic; that stretch reads ENVERIMSEEGLTPREATRKSMGQIQGA. The helical transmembrane segment at 442 to 460 threads the bilayer; that stretch reads LVGIAMVLSAVFVPMAFFG. Residues 461-473 are Periplasmic-facing; sequence GTTGAIYRQFSIT. Residues 474 to 496 traverse the membrane as a helical segment; sequence IVAAMVLSVLVAMILTPALCATL. The Cytoplasmic segment spans residues 497–537; sequence LKPLKKGEHHGQKGFFAWFNQMFNRNAERYEKGVAKILHRS. A helical membrane pass occupies residues 538–556; sequence LRWIVIYVLLLGGMVFLFL. Over 557-870 the chain is Periplasmic; that stretch reads RLPTSFLPLE…SYQERLSGAQ (314 aa). The chain crosses the membrane as a helical span at residues 871–890; sequence APALYAISLLVVFLCLAALY. The Cytoplasmic portion of the chain corresponds to 891-896; it reads ESWSVP. The helical transmembrane segment at 897–916 threads the bilayer; it reads FSVMLVVPLGVIGALLATWM. Residues 917-922 lie on the Periplasmic side of the membrane; the sequence is RGLEND. A helical transmembrane segment spans residues 923–944; that stretch reads VYFQVGLLTVIGLSAKNAILIV. Residues 945–971 lie on the Cytoplasmic side of the membrane; it reads EFANEMNQKGHDLFEATLHACRQRLRP. The chain crosses the membrane as a helical span at residues 972-990; sequence ILMTSLAFIFGVLPMATST. The Periplasmic portion of the chain corresponds to 991–1003; sequence GAGSGGQHAVGTG. Residues 1004–1026 form a helical membrane-spanning segment; it reads VMGGMISATILAIYFVPLFFVLV. At 1027–1037 the chain is on the cytoplasmic side; the sequence is RRRFPLKPRPE.

It belongs to the resistance-nodulation-cell division (RND) (TC 2.A.6) family.

The protein localises to the cell inner membrane. In terms of biological role, participates in the efflux of aminoglycosides. Confers resistance to a variety of these substances. The polypeptide is Probable aminoglycoside efflux pump (acrD) (Escherichia coli (strain K12)).